The following is a 263-amino-acid chain: Small ribosomal subunit protein eS4 (263 aa).

The region spanning 42 to 104 (LPLVIFLRNR…TNELFRLIYD (63 aa)) is the S4 RNA-binding domain.

It belongs to the eukaryotic ribosomal protein eS4 family.

The polypeptide is Small ribosomal subunit protein eS4 (RpS4) (Bombyx mori (Silk moth)).